We begin with the raw amino-acid sequence, 481 residues long: Pyruvate kinase (481 aa).

Arg36 serves as a coordination point for substrate. Positions 38, 40, and 70 each coordinate K(+). An ATP-binding site is contributed by 38 to 41; that stretch reads NFSH. Arg77 and Lys160 together coordinate ATP. Residue Glu225 coordinates Mg(2+). Substrate-binding residues include Gly251, Asp252, and Thr284. Asp252 contributes to the Mg(2+) binding site.

The protein belongs to the pyruvate kinase family. Homotetramer. It depends on Mg(2+) as a cofactor. Requires K(+) as cofactor.

The enzyme catalyses pyruvate + ATP = phosphoenolpyruvate + ADP + H(+). It functions in the pathway carbohydrate degradation; glycolysis; pyruvate from D-glyceraldehyde 3-phosphate: step 5/5. Its activity is regulated as follows. Allosterically activated by AMP and by several sugar phosphates. Belongs to type II PK. In Buchnera aphidicola subsp. Schizaphis graminum (strain Sg), this protein is Pyruvate kinase (pykA).